The sequence spans 405 residues: Acetate kinase (405 aa).

Asn-10 serves as a coordination point for Mg(2+). Lys-17 lines the ATP pocket. Substrate is bound at residue Arg-93. Residue Asp-150 is the Proton donor/acceptor of the active site. ATP-binding positions include 210 to 214, 284 to 286, and 332 to 336; these read HLGNG, DMR, and GVGEN. Residue Glu-386 participates in Mg(2+) binding.

The protein belongs to the acetokinase family. In terms of assembly, homodimer. Requires Mg(2+) as cofactor. Mn(2+) serves as cofactor.

The protein localises to the cytoplasm. It catalyses the reaction acetate + ATP = acetyl phosphate + ADP. Its pathway is metabolic intermediate biosynthesis; acetyl-CoA biosynthesis; acetyl-CoA from acetate: step 1/2. Catalyzes the formation of acetyl phosphate from acetate and ATP. Can also catalyze the reverse reaction. In Streptomyces avermitilis (strain ATCC 31267 / DSM 46492 / JCM 5070 / NBRC 14893 / NCIMB 12804 / NRRL 8165 / MA-4680), this protein is Acetate kinase.